The primary structure comprises 323 residues: tRNA U34 carboxymethyltransferase (323 aa).

Residues Lys91, Trp105, Lys110, Gly130, 181-182 (IE), Met196, Tyr200, and Arg315 each bind carboxy-S-adenosyl-L-methionine.

It belongs to the class I-like SAM-binding methyltransferase superfamily. CmoB family. Homotetramer.

The enzyme catalyses carboxy-S-adenosyl-L-methionine + 5-hydroxyuridine(34) in tRNA = 5-carboxymethoxyuridine(34) in tRNA + S-adenosyl-L-homocysteine + H(+). Functionally, catalyzes carboxymethyl transfer from carboxy-S-adenosyl-L-methionine (Cx-SAM) to 5-hydroxyuridine (ho5U) to form 5-carboxymethoxyuridine (cmo5U) at position 34 in tRNAs. This chain is tRNA U34 carboxymethyltransferase, found in Yersinia pseudotuberculosis serotype IB (strain PB1/+).